The sequence spans 129 residues: Glycoprotein hormone alpha-2 (129 aa).

The first 23 residues, 1 to 23 (MPMASPQTLVLYLLVLAVTEAWG), serve as a signal peptide directing secretion. Cystine bridges form between Cys-31–Cys-89, Cys-48–Cys-103, Cys-57–Cys-119, and Cys-61–Cys-121. N-linked (GlcNAc...) asparagine glycosylation is found at Asn-37 and Asn-81.

It belongs to the glycoprotein hormones subunit alpha family. As to quaternary structure, heterodimer with GPHB5; this heterodimer interacts with thyroid-stimulating hormone receptor (TSHR), and hence stimulates cAMP production. In terms of processing, glycosylated. Found in a variety of tissues.

The protein localises to the secreted. Functions as a heterodimeric glycoprotein hormone with GPHB5 able to bind and activate the thyroid-stimulating hormone receptor (TSHR), leading to increased cAMP production. Plays a central role in controlling thyroid cell metabolism. This chain is Glycoprotein hormone alpha-2 (GPHA2), found in Homo sapiens (Human).